A 214-amino-acid chain; its full sequence is 14-3-3 protein homolog 2 (214 aa).

This sequence belongs to the 14-3-3 family.

The sequence is that of 14-3-3 protein homolog 2 from Schistosoma mansoni (Blood fluke).